A 436-amino-acid polypeptide reads, in one-letter code: ATP-dependent RNA helicase RhlB (436 aa).

The short motif at 9-37 (QKFADLDLLPQVIEGLEKKGFDYCTPIQA) is the Q motif element. Residues 40–219 (LPVLLTGQDI…FEHMHNPEHV (180 aa)) form the Helicase ATP-binding domain. 53–60 (AQTGTGKT) serves as a coordination point for ATP. Positions 165 to 168 (DEAD) match the DEAD box motif. The region spanning 245-390 (ALLQTLIEEE…MSDYDASALL (146 aa)) is the Helicase C-terminal domain. Residues 398–436 (RLRTRNPQQRRSNNNGPRNGNRKPNQNRRPRQPRHNKEA) form a disordered region. Residues 402 to 421 (RNPQQRRSNNNGPRNGNRKP) show a composition bias toward low complexity. Over residues 422–436 (NQNRRPRQPRHNKEA) the composition is skewed to basic residues.

Belongs to the DEAD box helicase family. RhlB subfamily. Component of the RNA degradosome, which is a multiprotein complex involved in RNA processing and mRNA degradation.

The protein resides in the cytoplasm. It catalyses the reaction ATP + H2O = ADP + phosphate + H(+). Functionally, DEAD-box RNA helicase involved in RNA degradation. Has RNA-dependent ATPase activity and unwinds double-stranded RNA. In Vibrio atlanticus (strain LGP32) (Vibrio splendidus (strain Mel32)), this protein is ATP-dependent RNA helicase RhlB.